The sequence spans 30 residues: NVDFNSESTRRKKKQNEIVDLHNSLRRTVN.

The interval 1 to 30 (NVDFNSESTRRKKKQNEIVDLHNSLRRTVN) is disordered.

The protein belongs to the CRISP family. In terms of processing, contains 8 disulfide bonds. As to expression, expressed by the venom gland.

Its subcellular location is the secreted. In terms of biological role, inhibits calcium-activated potassium channels (KCa), voltage-gated potassium channel (Kv), and the calcium release channel/ryanodine receptor (RyR). In Naja mossambica (Mozambique spitting cobra), this protein is Cysteine-rich venom protein mossambin.